Here is a 161-residue protein sequence, read N- to C-terminus: Nucleotide-binding protein Sfri_0732 (161 aa).

Belongs to the YajQ family.

Nucleotide-binding protein. This chain is Nucleotide-binding protein Sfri_0732, found in Shewanella frigidimarina (strain NCIMB 400).